Here is a 138-residue protein sequence, read N- to C-terminus: ATP synthase epsilon chain (138 aa).

This sequence belongs to the ATPase epsilon chain family. In terms of assembly, F-type ATPases have 2 components, CF(1) - the catalytic core - and CF(0) - the membrane proton channel. CF(1) has five subunits: alpha(3), beta(3), gamma(1), delta(1), epsilon(1). CF(0) has four main subunits: a(1), b(1), b'(1) and c(9-12).

The protein localises to the cellular thylakoid membrane. Functionally, produces ATP from ADP in the presence of a proton gradient across the membrane. In terms of biological role, the complex from the organism is particularly stable to disruption and remains functional after 6 hours at 55 degrees Celsius. This chain is ATP synthase epsilon chain, found in Thermosynechococcus vestitus (strain NIES-2133 / IAM M-273 / BP-1).